The sequence spans 259 residues: Leucine-rich repeat-containing protein 3B (259 aa).

The signal sequence occupies residues 1-33 (MNLVDLWLTRSLSMCLLLQSFVLMILCFHSASM). The LRRNT domain occupies 34–64 (CPKGCLCSSSGGLNVTCSNANLKEIPRDLPP). N-linked (GlcNAc...) asparagine glycosylation is present at Asn47. 3 LRR repeats span residues 65 to 86 (ETVL…IFKD), 89 to 110 (QLRV…AFKG), and 114 to 135 (TLQT…AFNN). A glycan (N-linked (GlcNAc...) asparagine) is linked at Asn94. The region spanning 145–197 (NPWHCDCTLQQVLRSMVSNHETAHNVICKTSVLDEHAGRPFLNAANDADLCNL) is the LRRCT domain. A helical transmembrane segment spans residues 205 to 225 (AMLVTMFGWFTMVISYVVYYV).

It belongs to the LRRC3 family.

The protein localises to the membrane. In Bos taurus (Bovine), this protein is Leucine-rich repeat-containing protein 3B (LRRC3B).